A 252-amino-acid polypeptide reads, in one-letter code: Large ribosomal subunit protein uL4 (252 aa).

The protein belongs to the universal ribosomal protein uL4 family. As to quaternary structure, part of the 50S ribosomal subunit.

Functionally, one of the primary rRNA binding proteins, this protein initially binds near the 5'-end of the 23S rRNA. It is important during the early stages of 50S assembly. It makes multiple contacts with different domains of the 23S rRNA in the assembled 50S subunit and ribosome. Forms part of the polypeptide exit tunnel. The sequence is that of Large ribosomal subunit protein uL4 from Methanococcus vannielii (strain ATCC 35089 / DSM 1224 / JCM 13029 / OCM 148 / SB).